A 273-amino-acid chain; its full sequence is WIMGHMVNAIAQIDEFVNLGANSIETDVSFDDSANPEYTYHGVPCDCGRTCTKWEYFNEFLKGLRKATTPGDSKYHEKLVLVVFDLKTSSLYDNQASDAGKKLAKSLLQNYWNNGNNGGRAYIVLSIPNLAHYKLTTGFKETLTSEGHPELMDKVGYDFSGNDEIGDVAKTYKKAGVTGHVWQSDGITNCLLRGLDRVRKAVANRDSSNGYINKVHYWTVDKRATTRDALDAGVDGIMTNYPDVIADVLNESAYKAKFRIASYDDNPWETFKN.

Residue His5 is part of the active site. Mg(2+) contacts are provided by Glu25 and Asp27. His41 functions as the Nucleophile in the catalytic mechanism. Intrachain disulfides connect Cys45–Cys51 and Cys47–Cys190. Asp85 is a Mg(2+) binding site. An N-linked (GlcNAc...) asparagine glycan is attached at Asn250.

The protein belongs to the arthropod phospholipase D family. Class II subfamily. Mg(2+) is required as a cofactor. Expressed by the venom gland.

The protein resides in the secreted. It carries out the reaction an N-(acyl)-sphingosylphosphocholine = an N-(acyl)-sphingosyl-1,3-cyclic phosphate + choline. The enzyme catalyses an N-(acyl)-sphingosylphosphoethanolamine = an N-(acyl)-sphingosyl-1,3-cyclic phosphate + ethanolamine. The catalysed reaction is a 1-acyl-sn-glycero-3-phosphocholine = a 1-acyl-sn-glycero-2,3-cyclic phosphate + choline. It catalyses the reaction a 1-acyl-sn-glycero-3-phosphoethanolamine = a 1-acyl-sn-glycero-2,3-cyclic phosphate + ethanolamine. In terms of biological role, dermonecrotic toxins cleave the phosphodiester linkage between the phosphate and headgroup of certain phospholipids (sphingolipid and lysolipid substrates), forming an alcohol (often choline) and a cyclic phosphate. This toxin acts on sphingomyelin (SM). It may also act on ceramide phosphoethanolamine (CPE), lysophosphatidylcholine (LPC) and lysophosphatidylethanolamine (LPE), but not on lysophosphatidylserine (LPS), and lysophosphatidylglycerol (LPG). It acts by transphosphatidylation, releasing exclusively cyclic phosphate products as second products. Induces dermonecrosis, hemolysis, increased vascular permeability, edema, inflammatory response, and platelet aggregation. This is Dermonecrotic toxin LdSicTox-alphaIB1av from Loxosceles deserta (Desert recluse spider).